The chain runs to 512 residues: Ribose import ATP-binding protein RbsA 1 (512 aa).

ABC transporter domains lie at 8–244 and 257–502; these read FRME…IGRE and PEEK…LNIG. 40-47 is a binding site for ATP; sequence GENGAGKS.

The protein belongs to the ABC transporter superfamily. Ribose importer (TC 3.A.1.2.1) family. As to quaternary structure, the complex is composed of an ATP-binding protein (RbsA), two transmembrane proteins (RbsC) and a solute-binding protein (RbsB).

It is found in the cell inner membrane. It carries out the reaction D-ribose(out) + ATP + H2O = D-ribose(in) + ADP + phosphate + H(+). Its function is as follows. Part of the ABC transporter complex RbsABC involved in ribose import. Responsible for energy coupling to the transport system. The protein is Ribose import ATP-binding protein RbsA 1 of Rhizobium etli (strain ATCC 51251 / DSM 11541 / JCM 21823 / NBRC 15573 / CFN 42).